A 227-amino-acid polypeptide reads, in one-letter code: Cytochrome c oxidase subunit 2 (227 aa).

Topologically, residues 1–14 (MAYPFQLGFQDATS) are mitochondrial intermembrane. The helical transmembrane segment at 15-45 (PIMEELLHFHDHTLMIVFLISSLVLYVISAM) threads the bilayer. Topologically, residues 46-59 (LTTNLTHTSTMDAQ) are mitochondrial matrix. A helical membrane pass occupies residues 60–87 (EVETIWTILPAIILITIALPSLRILYMM). Residues 88 to 227 (DEINNPAMTI…YFEKWSVSML (140 aa)) lie on the Mitochondrial intermembrane side of the membrane. Cu cation is bound by residues histidine 161, cysteine 196, glutamate 198, cysteine 200, histidine 204, and methionine 207. Glutamate 198 serves as a coordination point for Mg(2+). Tyrosine 218 bears the Phosphotyrosine mark.

This sequence belongs to the cytochrome c oxidase subunit 2 family. Component of the cytochrome c oxidase (complex IV, CIV), a multisubunit enzyme composed of 14 subunits. The complex is composed of a catalytic core of 3 subunits MT-CO1, MT-CO2 and MT-CO3, encoded in the mitochondrial DNA, and 11 supernumerary subunits COX4I, COX5A, COX5B, COX6A, COX6B, COX6C, COX7A, COX7B, COX7C, COX8 and NDUFA4, which are encoded in the nuclear genome. The complex exists as a monomer or a dimer and forms supercomplexes (SCs) in the inner mitochondrial membrane with NADH-ubiquinone oxidoreductase (complex I, CI) and ubiquinol-cytochrome c oxidoreductase (cytochrome b-c1 complex, complex III, CIII), resulting in different assemblies (supercomplex SCI(1)III(2)IV(1) and megacomplex MCI(2)III(2)IV(2)). Found in a complex with TMEM177, COA6, COX18, COX20, SCO1 and SCO2. Interacts with TMEM177 in a COX20-dependent manner. Interacts with COX20. Interacts with COX16. Cu cation serves as cofactor.

Its subcellular location is the mitochondrion inner membrane. The catalysed reaction is 4 Fe(II)-[cytochrome c] + O2 + 8 H(+)(in) = 4 Fe(III)-[cytochrome c] + 2 H2O + 4 H(+)(out). Component of the cytochrome c oxidase, the last enzyme in the mitochondrial electron transport chain which drives oxidative phosphorylation. The respiratory chain contains 3 multisubunit complexes succinate dehydrogenase (complex II, CII), ubiquinol-cytochrome c oxidoreductase (cytochrome b-c1 complex, complex III, CIII) and cytochrome c oxidase (complex IV, CIV), that cooperate to transfer electrons derived from NADH and succinate to molecular oxygen, creating an electrochemical gradient over the inner membrane that drives transmembrane transport and the ATP synthase. Cytochrome c oxidase is the component of the respiratory chain that catalyzes the reduction of oxygen to water. Electrons originating from reduced cytochrome c in the intermembrane space (IMS) are transferred via the dinuclear copper A center (CU(A)) of subunit 2 and heme A of subunit 1 to the active site in subunit 1, a binuclear center (BNC) formed by heme A3 and copper B (CU(B)). The BNC reduces molecular oxygen to 2 water molecules using 4 electrons from cytochrome c in the IMS and 4 protons from the mitochondrial matrix. The sequence is that of Cytochrome c oxidase subunit 2 (MT-CO2) from Macrotus californicus (Californian leaf-nosed bat).